The following is a 301-amino-acid chain: GTPase Era (301 aa).

Residues 8–174 (KSGFVALVGR…LKTLKDYLPE (167 aa)) enclose the Era-type G domain. The segment at 16–23 (GRPNVGKS) is G1. A GTP-binding site is contributed by 16–23 (GRPNVGKS). The interval 42–46 (QTTRN) is G2. Residues 63–66 (DTPG) form a G3 region. GTP-binding positions include 63-67 (DTPGI) and 124-127 (NKID). A G4 region spans residues 124–127 (NKID). The G5 stretch occupies residues 153 to 155 (ISA). A KH type-2 domain is found at 197 to 282 (IREQILRLTD…NLKLWVKVRR (86 aa)).

Belongs to the TRAFAC class TrmE-Era-EngA-EngB-Septin-like GTPase superfamily. Era GTPase family. In terms of assembly, monomer.

It is found in the cytoplasm. The protein localises to the cell membrane. Its function is as follows. An essential GTPase that binds both GDP and GTP, with rapid nucleotide exchange. Plays a role in 16S rRNA processing and 30S ribosomal subunit biogenesis and possibly also in cell cycle regulation and energy metabolism. This Lactobacillus delbrueckii subsp. bulgaricus (strain ATCC 11842 / DSM 20081 / BCRC 10696 / JCM 1002 / NBRC 13953 / NCIMB 11778 / NCTC 12712 / WDCM 00102 / Lb 14) protein is GTPase Era.